Consider the following 791-residue polypeptide: Ribosome biogenesis protein ERB1 (791 aa).

Polar residues predominate over residues 1–12 (MARKNSSLNGSE). Disordered stretches follow at residues 1 to 60 (MARK…DDSD) and 68 to 87 (AEEE…SEEG). 2 stretches are compositionally biased toward acidic residues: residues 25 to 60 (ESEL…DDSD) and 69 to 87 (EEEN…SEEG). Residues 254–372 (RFVPSKHEAK…LRKVPGYSES (119 aa)) form a required for interaction with NOP7 region. Residues 372-408 (SVRERFERSLDLYLAPRVRKNKLNIDPESLIPELPST) form a required for interaction with YTM1 region. WD repeat units follow at residues 424-463 (GHKG…EVYQ), 472-512 (NNDD…FEIE), 576-618 (TCRK…TQSP), 621-659 (KSKG…LIKK), 662-701 (PGAR…TPYK), 705-744 (YHEK…DLMK), and 760-791 (VNSL…LWTT).

This sequence belongs to the WD repeat BOP1/ERB1 family. Component of the NOP7 complex, composed of ERB1, NOP7 and YTM1. The complex is held together by ERB1, which interacts with NOP7 via its N-terminal domain and with YTM1 via a high-affinity interaction between the seven-bladed beta-propeller domains of the 2 proteins. The NOP7 complex associates with the 66S pre-ribosome.

The protein resides in the nucleus. Its subcellular location is the nucleolus. The protein localises to the nucleoplasm. Component of the NOP7 complex, which is required for maturation of the 25S and 5.8S ribosomal RNAs and formation of the 60S ribosome. The polypeptide is Ribosome biogenesis protein ERB1 (Kluyveromyces lactis (strain ATCC 8585 / CBS 2359 / DSM 70799 / NBRC 1267 / NRRL Y-1140 / WM37) (Yeast)).